The chain runs to 1615 residues: MDQSQRTVAATPSSSRSYQFHPARAAIIDLFNLYLGRGSRQKPDESLRDPPNKSQKRVHAPNRDLPPRNEQFLLDFELLQSQFNDPEQLRTITESVLISLVVQCSNHAPRAEFLLFALRTLCRISYINWDTFLPSLLSSVSAAEASLSQGVQAAAATAGSSATSSQSVVPVSVNPTSLLPSAHGIGSPSASEVKSVENGQQIARAGQIVRENAMRNSQRIRAAAVNSLRQLSCKIILIGVESSLKPVTHAEIFQYMMNWLVNWDRRDLGTEDSVGKSWRSEKTLAEWLRSCLDVIWLLVEEGESRIPFYELLRSGLQFIENIPDDEALFTLIMEIHRRRDAMAMHMLMLDQHLHCPSFGTHRIVSQITANVPPEAVPHLRHSPITYPSVLGEPLYGEDLAMSIPKGSLDWERAVRCIRHAIRTTPSPDWWKRVLVVAPCYRPSTQAGPIPGAVFTSDMICEAIIDRIVELLKLTNSGNDCFGIDLVSVTFPPLYADANCWQEWLVFSDIFFFLIKSGCTDFVDFIDKLVLRLNGVDNHILRTNHVTWLLAQIIRVELVMTALNSDAKKVETTRKILSFHREDRNSDPNNPQSVLLDFVSSCQNLRIWSLSTTTRAYLNNEQLLKGKQIDEWWRSKGERMMDYMNMDDRSIGMFWVVSYTMAQPACETVINWLSSAGMAELPGLQPNDRVMMTQEVTPLPMSLLSGFSMNLCLKLALQMEEALFVSQVVPSIAMVETYTRLLLISPHSMFRSHFSQLAQRNASLLSKPGVTLLVLEILNYRLLPLYRYQGKSKTLMYDVTKIISALKGKRGDHRIFRLAENLCMNLILSLRDFFSVKREGKGPTEFTETLNRITIMTLAITIKTRGIADPDHMVYLQTMLEQILATSQHTWSEKTMRHFPSLLRETLKGRVDKRGLSIQAWQQAETTVINQCTQLLSPSAEPAYVSTYLSHSFPQHRQYLCAGACLLMQGHAENINSTNLARVLREVSPEEVTANIYTLVDVLLHHVHVDLQQGQSLEAVLDKAGANLAFFFWTHEMLPLDIFLLALIDRDDDPHALIIAMSLLKTPDLLLRIKNYCQNRGSPEHWLVTQVFKRNELQKALGNHLSWKDRYPTFFDDIAARLLPVIPLVLYRLIENNAMEQADNLLLAHSHFLAYHPLRFTFVRDILAYFYGHLPGKLVLRMLKVLDLSKIPFSESFPQYISPTGAPVCPPLDYFASLLLNLVNNVIPPLSSSSNCSSRSGSMADILNSSARPPHGKTPGTSQPGPANASEGQKAFYQIQDPGTYTQLVLETAVIEILSLPVSAAQIVSSLVQIIVNIQSTLIQSGNGFHGAANGVGQGSVLPTSPSGGSTDSMSASRSTCLIPGINTASFVSRSGYTCQQLSCLLIQACGLLLAQLPPDFHVQLYLEAARVTRETWWLKDGKRSQGELDSAVGYALMDPTWAAQDNTSTAIGNIVALLHAFFSNLPQEWLDGTNAIITNLRPVTSVAMLRVVFRIMGPLLPRLASTHTLFNKTLMLLLSALVDVFGKTAQTTAPVEASQIADLIDFLHHIIHYEGQGGAVQTSSKPRPDILALIGRAAETLRPDVQHLLAHLKTNPNSSIYAAAHQQNTAKTNTS.

2 disordered regions span residues arginine 40–proline 67 and serine 1230–glutamate 1270. The segment covering glutamine 41–proline 51 has biased composition (basic and acidic residues). Low complexity predominate over residues serine 1230–serine 1241.

It belongs to the Mediator complex subunit 23 family. Component of the Mediator complex.

The protein resides in the nucleus. Component of the Mediator complex, a coactivator involved in the regulated transcription of nearly all RNA polymerase II-dependent genes. Mediator functions as a bridge to convey information from gene-specific regulatory proteins to the basal RNA polymerase II transcription machinery. The Mediator complex, having a compact conformation in its free form, is recruited to promoters by direct interactions with regulatory proteins and serves for the assembly of a functional preinitiation complex with RNA polymerase II and the general transcription factors. The polypeptide is Mediator of RNA polymerase II transcription subunit 23 (MED23) (Arabidopsis thaliana (Mouse-ear cress)).